A 308-amino-acid chain; its full sequence is MRLAFLGTPDFAVQALAEIVEAGHEVACVYSQPPAPRGRGHELRPSPVHAYAESRGIPVRTPASMRDPAEIEAFRALGLDAAVVVAFGQILPREVLEAPRLGSFNVHASLLPRWRGAAPIQRAIMAGDAVTGVQVMRMTEGLDEGPVLSTATVRIDALETAATLHDRLAAAGAGLIVETLAQIAAGRAVETPQAEAGVTYAKKIRPKEARIDWTRPGPEVDRKIRGLSPFPGAWFELPTEKGPVRVKALLSAFEDAEGPAGETLDDRLLVGTGHGAVRLLRVQREGRGPQDAEAFLRGTAVPAGVKLS.

Residue 109–112 (SLLP) participates in (6S)-5,6,7,8-tetrahydrofolate binding.

It belongs to the Fmt family.

The catalysed reaction is L-methionyl-tRNA(fMet) + (6R)-10-formyltetrahydrofolate = N-formyl-L-methionyl-tRNA(fMet) + (6S)-5,6,7,8-tetrahydrofolate + H(+). In terms of biological role, attaches a formyl group to the free amino group of methionyl-tRNA(fMet). The formyl group appears to play a dual role in the initiator identity of N-formylmethionyl-tRNA by promoting its recognition by IF2 and preventing the misappropriation of this tRNA by the elongation apparatus. This Phenylobacterium zucineum (strain HLK1) protein is Methionyl-tRNA formyltransferase.